A 619-amino-acid chain; its full sequence is Chaperone protein HscA homolog (619 aa).

This sequence belongs to the heat shock protein 70 family.

Functionally, chaperone involved in the maturation of iron-sulfur cluster-containing proteins. Has a low intrinsic ATPase activity which is markedly stimulated by HscB. The polypeptide is Chaperone protein HscA homolog (Acinetobacter baumannii (strain ACICU)).